The sequence spans 165 residues: Phosphopantetheine adenylyltransferase (165 aa).

Ser-9 contributes to the substrate binding site. ATP contacts are provided by residues 9–10 and His-17; that span reads SF. Residues Lys-41, Ile-75, and Arg-89 each coordinate substrate. ATP-binding positions include 90 to 92, Glu-100, and 125 to 131; these read GVR and YLFVRSD.

The protein belongs to the bacterial CoaD family. In terms of assembly, homohexamer. Mg(2+) serves as cofactor.

The protein localises to the cytoplasm. It carries out the reaction (R)-4'-phosphopantetheine + ATP + H(+) = 3'-dephospho-CoA + diphosphate. It participates in cofactor biosynthesis; coenzyme A biosynthesis; CoA from (R)-pantothenate: step 4/5. Reversibly transfers an adenylyl group from ATP to 4'-phosphopantetheine, yielding dephospho-CoA (dPCoA) and pyrophosphate. The sequence is that of Phosphopantetheine adenylyltransferase from Borrelia hermsii (strain HS1 / DAH).